A 104-amino-acid chain; its full sequence is Small ribosomal subunit protein uS10 (104 aa).

Belongs to the universal ribosomal protein uS10 family. In terms of assembly, part of the 30S ribosomal subunit.

Its function is as follows. Involved in the binding of tRNA to the ribosomes. The chain is Small ribosomal subunit protein uS10 from Ruegeria pomeroyi (strain ATCC 700808 / DSM 15171 / DSS-3) (Silicibacter pomeroyi).